The sequence spans 274 residues: Dermonecrotic toxin LspiSicTox-betaIII2 (274 aa).

Residue histidine 5 is part of the active site. The Mg(2+) site is built by glutamate 25 and aspartate 27. The Nucleophile role is filled by histidine 41. 2 cysteine pairs are disulfide-bonded: cysteine 45–cysteine 51 and cysteine 47–cysteine 189. Aspartate 85 serves as a coordination point for Mg(2+).

The protein belongs to the arthropod phospholipase D family. Class II subfamily. Requires Mg(2+) as cofactor. Expressed by the venom gland.

It is found in the secreted. It carries out the reaction an N-(acyl)-sphingosylphosphocholine = an N-(acyl)-sphingosyl-1,3-cyclic phosphate + choline. The enzyme catalyses an N-(acyl)-sphingosylphosphoethanolamine = an N-(acyl)-sphingosyl-1,3-cyclic phosphate + ethanolamine. The catalysed reaction is a 1-acyl-sn-glycero-3-phosphocholine = a 1-acyl-sn-glycero-2,3-cyclic phosphate + choline. It catalyses the reaction a 1-acyl-sn-glycero-3-phosphoethanolamine = a 1-acyl-sn-glycero-2,3-cyclic phosphate + ethanolamine. In terms of biological role, dermonecrotic toxins cleave the phosphodiester linkage between the phosphate and headgroup of certain phospholipids (sphingolipid and lysolipid substrates), forming an alcohol (often choline) and a cyclic phosphate. This toxin acts on sphingomyelin (SM). It may also act on ceramide phosphoethanolamine (CPE), lysophosphatidylcholine (LPC) and lysophosphatidylethanolamine (LPE), but not on lysophosphatidylserine (LPS), and lysophosphatidylglycerol (LPG). It acts by transphosphatidylation, releasing exclusively cyclic phosphate products as second products. Induces dermonecrosis, hemolysis, increased vascular permeability, edema, inflammatory response, and platelet aggregation. This Loxosceles spinulosa (Recluse spider) protein is Dermonecrotic toxin LspiSicTox-betaIII2.